We begin with the raw amino-acid sequence, 268 residues long: uncharacterized protein (268 aa).

The tract at residues 45–64 (SDTQGPAPGINGQGKPSPGA) is disordered.

This is an uncharacterized protein from Aquifex aeolicus (strain VF5).